The primary structure comprises 1840 residues: Neurexin 1 (1840 aa).

A disordered region spans residues 1-50; the sequence is MKAPHSATYQDNYADAAMTARTRPSMDMDQQRNRNQAELRLLPAQRTSTS. Over 1–1696 the chain is Extracellular; that stretch reads MKAPHSATYQ…NSIEEERTAM (1696 aa). The span at 24-37 shows a compositional bias: basic and acidic residues; the sequence is PSMDMDQQRNRNQA. The region spanning 104-289 is the Laminin G-like 1 domain; it reads GFQLDGSQNS…RDIKCGDVPC (186 aa). Residues 309–347 enclose the EGF-like 1 domain; that stretch reads TTDACERNDPCQHGGICISTDSGPICECRNLEYDGQYCE. Cystine bridges form between C313/C325, C319/C334, C336/C346, C511/C547, C710/C739, C746/C757, C751/C766, and C768/C778. Laminin G-like domains lie at 352–547 and 554–739; these read PSEA…EYQC and DPVT…KPSC. The EGF-like 2 domain occupies 742 to 779; the sequence is QANVCNGNPCLNGGTCLEGWNRPICDCSATLYGGPTCG. Laminin G-like domains follow at residues 784–964 and 982–1158; these read TLAF…LPSA and HAAT…VSGC. 4 disulfides stabilise this stretch: C1130–C1158, C1164–C1175, C1169–C1184, and C1186–C1196. The EGF-like 3 domain occupies 1160–1197; it reads GPTKCSQNACANRGNCVQQWNAYACECDMTSYTGPTCY. In terms of domain architecture, Laminin G-like 6 spans 1201-1416; sequence IAYEFGNNKG…LIFSGAGSGC (216 aa). The tract at residues 1411 to 1651 is disordered; sequence GAGSGCRGDD…DEHHPLPPLP (241 aa). Over residues 1447-1472 the composition is skewed to low complexity; the sequence is QTTTSQQGNSLSTGGSSSGGVITNGT. Positions 1491 to 1527 are enriched in polar residues; it reads TTEQFTSTSTARGSESNNEMVTITTTGRSDVTTEQHQ. Residues 1528–1600 show a composition bias toward low complexity; it reads GSSSSSSSGS…TTTTTTTTQA (73 aa). Basic and acidic residues predominate over residues 1632–1646; the sequence is RNDHDRMQLPDEHHP. A helical membrane pass occupies residues 1697–1717; that stretch reads IIGIVAGILIAVVLVILLVLW. Residues 1718 to 1840 lie on the Cytoplasmic side of the membrane; it reads LKSNGDRGYK…DSKDVKEWYV (123 aa). A disordered region spans residues 1737–1840; sequence GSHNPNAALL…DSKDVKEWYV (104 aa). Residues 1747 to 1757 show a composition bias toward polar residues; the sequence is GNTSTNGSYHQ. Positions 1774–1787 are enriched in low complexity; it reads QQQHHAQQQMHNGH. Residues 1788–1813 are compositionally biased toward gly residues; it reads NGNGNGGGGGGGGMMSSGSGSLGYGS. The Zn(2+) site is built by D1831 and D1834. Positions 1831 to 1840 are enriched in basic and acidic residues; the sequence is DSKDVKEWYV. The PDZ domain binding signature appears at 1837 to 1840; it reads EWYV.

Belongs to the neurexin family. Interacts (via C-terminal PDZ binding motif) with CASK (via PDZ domain). Interacts (via cytoplasmic domain) with apolpp/ApoLI; the interaction supports apolpp/ApoLI protein stability. Interact (via cytoplasmic domain) with Spn/Spinophilin. Interacts with RhoGAP100F/Syd-1 (via PDZ domain); RhoGAP100F/Syd-1 may recruit Nrx-1 to the presynaptic active zone. As to expression, expressed in brain, with expression in medulla, lamina, lobula, lobula plate, mushroom body and antennal lobe, and in retina (at protein level). Expressed in rabdomere of photoreceptor cells (at protein level).

Its subcellular location is the synaptic cell membrane. It localises to the presynaptic cell membrane. The protein resides in the postsynaptic cell membrane. Neuronal cell adhesion protein involved in synapse formation, development of synaptic active zones, synaptic regulation and visual function. Plays a role in cell adhesion between the pre- and the postsynaptic cell. Required for proper proliferation of synaptic boutons during larval development, a process necessary for coordinated matching of pre-and postsynaptic compartments. Promotes presynaptic active zone formation and neurotransmitter release. Spn/Spinophilin fine-tunes nrx-1/nlg1 signaling at the pre-synapse to control active zone number and functionality and thereby optimizing action potential-induced exocytosis. Required for synapse formation in central nervous system. By regulating synapse formation, may play a role in larval associative learning. Together with RhoGAP100F/syd-1, controls synapse formation at the neuromuscular junction. Essential for synaptic vesicle cycling, which plays critical roles in neurotransmission at neuromuscular junctions (NMJ). Regulated and restricts formation of glutamate receptor clusters. Mediates retinoid transport and subsequent rhodopsin maturation and may regulate lipoprotein function; thereby playing a role in vision. Regulates sleep, circadian rhythm and synaptic plasticity. Together with CASK, required for locomotion. In Drosophila melanogaster (Fruit fly), this protein is Neurexin 1.